Reading from the N-terminus, the 455-residue chain is UPF0053 protein MT1890 (455 aa).

In terms of domain architecture, CNNM transmembrane spans 2–205 (NLTDTVATIL…ARSGALDDAT (204 aa)). 4 helical membrane-spanning segments follow: residues 6 to 26 (TVAT…FVAA), 68 to 88 (LGIS…VAEL), 106 to 126 (LITF…GELV), and 148 to 168 (LFSL…NWIV). 2 CBS domains span residues 224-285 (MTPR…AHTL) and 286-346 (LTTV…VRDE).

The protein belongs to the UPF0053 family.

Its subcellular location is the cell membrane. The protein is UPF0053 protein MT1890 of Mycobacterium tuberculosis (strain CDC 1551 / Oshkosh).